The following is a 1640-amino-acid chain: RING finger protein 17 (1640 aa).

Residues 30–73 form an RING-type zinc finger; it reads CTRCGRKVSVASGDHHKFPCGHAFCELCLLAPQEYTTSKCTDCE. The residue at position 134 (S134) is a Phosphoserine. At K229 the chain carries N6-acetyllysine. Disordered stretches follow at residues 348–376 and 413–435; these read TDET…TKEM and DDPI…APVG. Basic and acidic residues predominate over residues 360-373; that stretch reads APDRHLEGKKKQPT. 2 consecutive Tudor domains span residues 751-809 and 985-1044; these read CPLQ…FLEP and KWEC…LKTM. The span at 1170–1184 shows a compositional bias: basic and acidic residues; the sequence is NEHKVPDSKGKKSES. A disordered region spans residues 1170-1191; sequence NEHKVPDSKGKKSESRSTGCYR. Tudor domains lie at 1246-1303 and 1496-1556; these read SWKK…PDTP and DFSS…LMQY.

Interacts with MXD1, MXD3, MXD4, MXI1 and PIWIL1. Self-associates. As to expression, expressed at high levels in adult testis. Expressed in male germ cells (at protein level). Expressed at lower levels in adult thyroid, submaxillary gland, ovary and epididymis.

Its subcellular location is the cytoplasm. The protein resides in the nucleus. Seems to be involved in regulation of transcriptional activity of MYC. In vitro, inhibits DNA-binding activity of Mad-MAX heterodimers. Can recruit Mad transcriptional repressors (MXD1, MXD3, MXD4 and MXI1) to the cytoplasm. May be involved in spermiogenesis. The chain is RING finger protein 17 (Rnf17) from Mus musculus (Mouse).